The primary structure comprises 343 residues: MIHNRKTQTVVITGASSNLGIAIGKRLIDEKKEDAHLTIVVTSRTLRNVRVAIKTLKAHAVAKEVGPEVDFDYLLFDLADMTSINGALVELKLRFSRIDTLIFNSNAANYIGINWPLAMWRFTTQFKSEIENPSCMIQAVGVKSDDGMGSAYQSNVFGPWYMVLELTEQLKNGGKVIWISSITSSEKYVDLEDIELIHNKEPYKGSKRLIDVAHNYYSPKLEEEHGIYSYLTDPGIFTSSSASEYLNIFSAFGMYLMFYFARLIGLTTMNIDPYKGANVPVWVTLSEDPSALKREYRLGSRTGRWGTEMMDATKLQYEGSEEVGAYIDKGVGEWREKLKDQIN.

Positions 19 and 42 each coordinate NADP(+). Active-site proton donor residues include S180 and Y203. 3 residues coordinate NADP(+): Y203, K207, and S239. The active-site Lowers pKa of active site Tyr is K207.

Belongs to the short-chain dehydrogenases/reductases (SDR) family. ERG27 subfamily.

The catalysed reaction is a 3beta-hydroxysteroid + NADP(+) = a 3-oxosteroid + NADPH + H(+). The protein operates within steroid biosynthesis; zymosterol biosynthesis; zymosterol from lanosterol: step 5/6. Its function is as follows. Responsible for the reduction of the keto group on the C-3 of sterols. The chain is 3-keto-steroid reductase (ERG27) from Yarrowia lipolytica (strain CLIB 122 / E 150) (Yeast).